We begin with the raw amino-acid sequence, 204 residues long: Photosystem I reaction center subunit II-2, chloroplastic (204 aa).

The N-terminal 44 residues, 1–44 (MATQAAGIFSPAITTTTSAVKKLHLFSSSHRPKSLSFTKTAIRA), are a transit peptide targeting the chloroplast. At Thr47 the chain carries Phosphothreonine. The disordered stretch occupies residues 47–71 (TESSSAAPAVKEAPVGFTPPQLDPN). The tract at residues 137–145 (RLRSKYKIT) is ferredoxin and ferredoxin-oxidoreductase binding.

The protein belongs to the PsaD family. In terms of assembly, interacts with CURT1C.

The protein resides in the plastid. It is found in the chloroplast thylakoid membrane. Functionally, PSAD can form complexes with ferredoxin and ferredoxin-oxidoreductase in photosystem I (PS I) reaction center. PSAD may encode the ferredoxin-docking protein. This chain is Photosystem I reaction center subunit II-2, chloroplastic (PSAD2), found in Arabidopsis thaliana (Mouse-ear cress).